The sequence spans 513 residues: 2-isopropylmalate synthase (513 aa).

One can recognise a Pyruvate carboxyltransferase domain in the interval 5 to 267 (LVIFDTTLRD…ETRIDTTQIV (263 aa)). 4 residues coordinate Mn(2+): D14, H202, H204, and N238. A regulatory domain region spans residues 393–513 (KLVYSRVCSE…LDKVKAQGGV (121 aa)).

This sequence belongs to the alpha-IPM synthase/homocitrate synthase family. LeuA type 1 subfamily. In terms of assembly, homodimer. It depends on Mn(2+) as a cofactor.

Its subcellular location is the cytoplasm. It catalyses the reaction 3-methyl-2-oxobutanoate + acetyl-CoA + H2O = (2S)-2-isopropylmalate + CoA + H(+). The protein operates within amino-acid biosynthesis; L-leucine biosynthesis; L-leucine from 3-methyl-2-oxobutanoate: step 1/4. In terms of biological role, catalyzes the condensation of the acetyl group of acetyl-CoA with 3-methyl-2-oxobutanoate (2-ketoisovalerate) to form 3-carboxy-3-hydroxy-4-methylpentanoate (2-isopropylmalate). The polypeptide is 2-isopropylmalate synthase (Dechloromonas aromatica (strain RCB)).